The chain runs to 364 residues: Melatonin receptor type 1B (364 aa).

Over 1 to 42 (MPENSSIPNCCEASGLAARPSWSGSAGARPPVTARAPWVAPM) the chain is Extracellular. Residue N4 is glycosylated (N-linked (GlcNAc...) asparagine). The chain crosses the membrane as a helical span at residues 43–63 (LSTVVVVTTAVDFVGNLLVIL). Over 64 to 76 (SVLRNRKLRNAGN) the chain is Cytoplasmic. The helical transmembrane segment at 77–97 (LFVVSLALADLVIALYPYPLI) threads the bilayer. At 98 to 115 (LVAIIRDGWVLGEAHCKA) the chain is on the extracellular side. A disulfide bridge connects residues C113 and C190. Residues 116 to 136 (SAFVMGLSVIGSVFNITAIAI) form a helical membrane-spanning segment. The Cytoplasmic portion of the chain corresponds to 137 to 155 (NRYCCICHSTTYHRVCSHW). The chain crosses the membrane as a helical span at residues 156-176 (YTPIYISLVWLLTLVALVPNF). At 177-200 (FVGSLEYDPRIYSCTFIQTASTQY) the chain is on the extracellular side. Residues 201–221 (TAAVVAIHFLLPMAVVSFCYL) traverse the membrane as a helical segment. The Cytoplasmic segment spans residues 222 to 253 (RIWVLVLQARRKAKATRKLRLRPSDLRSFLTM). The helical transmembrane segment at 254–274 (FAVFVVFAICWAPLNCIGLAV) threads the bilayer. At 275-287 (AINPEAMALQVPE) the chain is on the extracellular side. A helical membrane pass occupies residues 288–308 (GLFVTSYFLAYFNSCLNAIVY). At 309–364 (GLLNQNFRREYKRILLAIWNTRRCIQHASKHCLTEERQGPTPPAARATVPVKEGAL) the chain is on the cytoplasmic side. The tract at residues 343–364 (EERQGPTPPAARATVPVKEGAL) is disordered. Low complexity predominate over residues 352–364 (AARATVPVKEGAL).

It belongs to the G-protein coupled receptor 1 family.

The protein resides in the cell membrane. Its function is as follows. High affinity receptor for melatonin. The activity of this receptor is mediated by pertussis toxin sensitive G proteins that inhibits adenylate cyclase activity. The chain is Melatonin receptor type 1B (Mtnr1b) from Mus musculus (Mouse).